The chain runs to 182 residues: MGLRPAKIDRDVDKPAYTRREYIRGAPGPKITIFDMGNLSAEFQYEVSLHAEQAMQIRQNALEAIRIQVNRYLQKNVGRSNYHFKIRVYPFQVLRENPMATGRKADRYGNGMRRPFGKPIGLAARVKKDQKILTVWVNEGHLKFALEAMRRAAMKLPYSAYYRIYDKEGNDITSKVLSTMKR.

The protein belongs to the universal ribosomal protein uL16 family.

This is Large ribosomal subunit protein uL16 from Thermococcus onnurineus (strain NA1).